The chain runs to 181 residues: SRP-independent targeting protein 2 (181 aa).

The Cytoplasmic portion of the chain corresponds to 1–15 (MAGKAGRKQASSNAK). A helical transmembrane segment spans residues 16-36 (IIQGLYKQVSLFLGMAIVRLF). Residues 37-45 (ISRKVTIGQ) are Lumenal-facing. The chain crosses the membrane as a helical span at residues 46-66 (WIKLVALNVPMFVALYIIVLS). At 67 to 89 (GKPKYDGNRVVKQGIDLNDNTNL) the chain is on the cytoplasmic side. The helical transmembrane segment at 90-110 (ISYFFDLIYLSLFGNIGIIAF) threads the bilayer. The Lumenal portion of the chain corresponds to 111-112 (RT). The helical transmembrane segment at 113–133 (FKFWWCLLLCPIYAGYKLYGL) threads the bilayer. At 134-181 (KNMFMPGAQQTQADNRSKNANEGQSKSKRQMKRERRGETDSKIKYKYR) the chain is on the cytoplasmic side. Over residues 144–157 (TQADNRSKNANEGQ) the composition is skewed to polar residues. A disordered region spans residues 144–181 (TQADNRSKNANEGQSKSKRQMKRERRGETDSKIKYKYR). Over residues 168-181 (RRGETDSKIKYKYR) the composition is skewed to basic and acidic residues.

It belongs to the TMEM208 family. In terms of assembly, interacts with SND1, PHO88/SND3 and the translocon complex subunit SEC61. ENV10/SND2 and PHO88/SND3 form a complex with the translocon in the endoplasmic reticulum membrane.

The protein localises to the endoplasmic reticulum membrane. In terms of biological role, functions in the SND pathway, a SRP (signal recognition particle) and GET (guided entry of tail-anchored proteins) independent pathway for targeting a broad range of substrate proteins to the endoplasmic reticulum. SND functions in parallel to GET in targeting proteins with downstream hydrophobic motifs. Involved in vacuolar processing and morphology. The sequence is that of SRP-independent targeting protein 2 from Saccharomyces cerevisiae (strain ATCC 204508 / S288c) (Baker's yeast).